We begin with the raw amino-acid sequence, 70 residues long: Mu-agatoxin-Ao1b (70 aa).

Residues 1 to 20 (MKAIIFFCFLSVMVFIVAEA) form the signal peptide. Residues 21–33 (SSLEALKIFEGER) constitute a propeptide that is removed on maturation. Cystine bridges form between C35–C50, C42–C55, C49–C65, and C57–C63. N69 is modified (asparagine amide).

It belongs to the neurotoxin 07 (Beta/delta-agtx) family. 04 (aga-5) subfamily. In terms of tissue distribution, expressed by the venom gland.

It is found in the secreted. In terms of biological role, insecticidal neurotoxin that modulates the insect Nav channel (DmNaV1/tipE (para/tipE)) in a unique manner, with both the activation and inactivation processes being affected. The voltage dependence of activation is shifted toward more hyperpolarized potentials (analogous to site 4 toxins) and a non-inactivating persistent sodium current is induced (site 3-like action). Interestingly, both effects take place in a voltage-dependent manner, producing a bell-shaped curve between -80 and 0 mV. The chain is Mu-agatoxin-Ao1b from Agelena orientalis (Funnel-web spider).